The sequence spans 106 residues: Urease subunit beta (106 aa).

It belongs to the urease beta subunit family. Heterotrimer of UreA (gamma), UreB (beta) and UreC (alpha) subunits. Three heterotrimers associate to form the active enzyme.

The protein resides in the cytoplasm. The catalysed reaction is urea + 2 H2O + H(+) = hydrogencarbonate + 2 NH4(+). It functions in the pathway nitrogen metabolism; urea degradation; CO(2) and NH(3) from urea (urease route): step 1/1. The polypeptide is Urease subunit beta (Citrobacter koseri (strain ATCC BAA-895 / CDC 4225-83 / SGSC4696)).